Here is a 105-residue protein sequence, read N- to C-terminus: uncharacterized protein (105 aa).

This is an uncharacterized protein from Saccharomyces cerevisiae (strain ATCC 204508 / S288c) (Baker's yeast).